Reading from the N-terminus, the 89-residue chain is Small ribosomal subunit protein uS15 (89 aa).

Belongs to the universal ribosomal protein uS15 family. As to quaternary structure, part of the 30S ribosomal subunit. Forms a bridge to the 50S subunit in the 70S ribosome, contacting the 23S rRNA.

One of the primary rRNA binding proteins, it binds directly to 16S rRNA where it helps nucleate assembly of the platform of the 30S subunit by binding and bridging several RNA helices of the 16S rRNA. Functionally, forms an intersubunit bridge (bridge B4) with the 23S rRNA of the 50S subunit in the ribosome. This chain is Small ribosomal subunit protein uS15, found in Methylobacterium nodulans (strain LMG 21967 / CNCM I-2342 / ORS 2060).